Reading from the N-terminus, the 223-residue chain is ATP synthase subunit a 1 (223 aa).

5 consecutive transmembrane segments (helical) span residues 20-40, 78-98, 108-128, 174-194, and 196-216; these read LTIA…AFAS, YLPY…CTII, LSTT…FGIA, MILA…MSVL, and LLTG…YISA.

The protein belongs to the ATPase A chain family. As to quaternary structure, F-type ATPases have 2 components, CF(1) - the catalytic core - and CF(0) - the membrane proton channel. CF(1) has five subunits: alpha(3), beta(3), gamma(1), delta(1), epsilon(1). CF(0) has four main subunits: a, b, b' and c.

The protein resides in the cell inner membrane. Functionally, key component of the proton channel; it plays a direct role in the translocation of protons across the membrane. This Chlorobium luteolum (strain DSM 273 / BCRC 81028 / 2530) (Pelodictyon luteolum) protein is ATP synthase subunit a 1.